The following is a 104-amino-acid chain: Co-chaperonin GroES 1 (104 aa).

It belongs to the GroES chaperonin family. In terms of assembly, heptamer of 7 subunits arranged in a ring. Interacts with the chaperonin GroEL.

The protein resides in the cytoplasm. Its function is as follows. Together with the chaperonin GroEL, plays an essential role in assisting protein folding. The GroEL-GroES system forms a nano-cage that allows encapsulation of the non-native substrate proteins and provides a physical environment optimized to promote and accelerate protein folding. GroES binds to the apical surface of the GroEL ring, thereby capping the opening of the GroEL channel. This is Co-chaperonin GroES 1 from Mesorhizobium japonicum (strain LMG 29417 / CECT 9101 / MAFF 303099) (Mesorhizobium loti (strain MAFF 303099)).